Reading from the N-terminus, the 507-residue chain is Probable allantoinase (507 aa).

Zn(2+)-binding residues include His105, His107, Lys195, His231, His294, and Asp368. Lys195 bears the N6-carboxylysine mark.

The protein belongs to the metallo-dependent hydrolases superfamily. Allantoinase family. Homotetramer. It depends on Zn(2+) as a cofactor. In terms of processing, carboxylation allows a single lysine to coordinate two zinc ions.

The catalysed reaction is (S)-allantoin + H2O = allantoate + H(+). It functions in the pathway nitrogen metabolism; (S)-allantoin degradation; allantoate from (S)-allantoin: step 1/1. Its function is as follows. Catalyzes the conversion of allantoin (5-ureidohydantoin) to allantoate by hydrolytic cleavage of the five-member hydantoin ring. Catalyzes the first step of the ureide allantoin degradation followed by the sequential activity of AAH, UGLYAH and UAH which allows a complete purine breakdown without the intermediate generation of urea. The chain is Probable allantoinase (ALN) from Oryza sativa subsp. japonica (Rice).